Reading from the N-terminus, the 209-residue chain is Pyridoxal 5'-phosphate synthase subunit PdxT (209 aa).

Residue 58–60 participates in L-glutamine binding; the sequence is GES. The Nucleophile role is filled by Cys90. L-glutamine is bound by residues Arg119 and 148-149; that span reads IR. Residues His185 and Glu187 each act as charge relay system in the active site.

The protein belongs to the glutaminase PdxT/SNO family. In terms of assembly, in the presence of PdxS, forms a dodecamer of heterodimers. Only shows activity in the heterodimer.

The enzyme catalyses aldehydo-D-ribose 5-phosphate + D-glyceraldehyde 3-phosphate + L-glutamine = pyridoxal 5'-phosphate + L-glutamate + phosphate + 3 H2O + H(+). It catalyses the reaction L-glutamine + H2O = L-glutamate + NH4(+). The protein operates within cofactor biosynthesis; pyridoxal 5'-phosphate biosynthesis. Catalyzes the hydrolysis of glutamine to glutamate and ammonia as part of the biosynthesis of pyridoxal 5'-phosphate. The resulting ammonia molecule is channeled to the active site of PdxS. This is Pyridoxal 5'-phosphate synthase subunit PdxT from Clavibacter michiganensis subsp. michiganensis (strain NCPPB 382).